The primary structure comprises 430 residues: UDP-N-acetylglucosamine 1-carboxyvinyltransferase (430 aa).

22–23 contributes to the phosphoenolpyruvate binding site; sequence KN. Arginine 102 is a UDP-N-acetyl-alpha-D-glucosamine binding site. The active-site Proton donor is cysteine 126. Cysteine 126 is subject to 2-(S-cysteinyl)pyruvic acid O-phosphothioketal. UDP-N-acetyl-alpha-D-glucosamine contacts are provided by residues 131–135, 172–175, aspartate 317, and isoleucine 339; these read RPVDL and KVSV.

Belongs to the EPSP synthase family. MurA subfamily.

It is found in the cytoplasm. It catalyses the reaction phosphoenolpyruvate + UDP-N-acetyl-alpha-D-glucosamine = UDP-N-acetyl-3-O-(1-carboxyvinyl)-alpha-D-glucosamine + phosphate. The protein operates within cell wall biogenesis; peptidoglycan biosynthesis. Its function is as follows. Cell wall formation. Adds enolpyruvyl to UDP-N-acetylglucosamine. In Rhizobium etli (strain ATCC 51251 / DSM 11541 / JCM 21823 / NBRC 15573 / CFN 42), this protein is UDP-N-acetylglucosamine 1-carboxyvinyltransferase.